A 247-amino-acid chain; its full sequence is tRNA uridine(34) hydroxylase (247 aa).

Positions 124 to 218 constitute a Rhodanese domain; the sequence is TKQNVIVIDT…YLEDTQNKNN (95 aa). C178 functions as the Cysteine persulfide intermediate in the catalytic mechanism.

Belongs to the TrhO family.

It carries out the reaction uridine(34) in tRNA + AH2 + O2 = 5-hydroxyuridine(34) in tRNA + A + H2O. In terms of biological role, catalyzes oxygen-dependent 5-hydroxyuridine (ho5U) modification at position 34 in tRNAs. This is tRNA uridine(34) hydroxylase from Rickettsia akari (strain Hartford).